Consider the following 526-residue polypeptide: Putative D-lactate dehydrogenase C713.03, mitochondrial (526 aa).

The region spanning 93–272 is the FAD-binding PCMH-type domain; that stretch reads YRGKTQLALK…TKLSVICPKR (180 aa).

Belongs to the FAD-binding oxidoreductase/transferase type 4 family. The cofactor is FAD.

The protein resides in the mitochondrion matrix. It catalyses the reaction (R)-lactate + 2 Fe(III)-[cytochrome c] = 2 Fe(II)-[cytochrome c] + pyruvate + 2 H(+). The sequence is that of Putative D-lactate dehydrogenase C713.03, mitochondrial from Schizosaccharomyces pombe (strain 972 / ATCC 24843) (Fission yeast).